A 366-amino-acid polypeptide reads, in one-letter code: Protein disulfide isomerase-like 2-1 (366 aa).

An N-terminal signal peptide occupies residues 1–29 (MATPQISRKALASLLLLVAAAAAVSTASA). 2 consecutive Thioredoxin domains span residues 30-138 (DDVL…SEAA) and 139-257 (TNVK…EKCG). Catalysis depends on nucleophile residues C59, C62, C178, and C181. 2 disulfides stabilise this stretch: C59–C62 and C178–C181.

It belongs to the protein disulfide isomerase family.

The protein localises to the secreted. It catalyses the reaction Catalyzes the rearrangement of -S-S- bonds in proteins.. In terms of biological role, acts as a protein-folding catalyst that interacts with nascent polypeptides to catalyze the formation, isomerization, and reduction or oxidation of disulfide bonds. May play a role in storage protein biogenesis. This Oryza sativa subsp. japonica (Rice) protein is Protein disulfide isomerase-like 2-1 (PDIL2-1).